Consider the following 323-residue polypeptide: tRNA U34 carboxymethyltransferase (323 aa).

Carboxy-S-adenosyl-L-methionine-binding positions include lysine 91, tryptophan 105, lysine 110, glycine 130, 152–154 (DPS), 181–182 (IE), methionine 196, tyrosine 200, and arginine 315.

The protein belongs to the class I-like SAM-binding methyltransferase superfamily. CmoB family. As to quaternary structure, homotetramer.

The catalysed reaction is carboxy-S-adenosyl-L-methionine + 5-hydroxyuridine(34) in tRNA = 5-carboxymethoxyuridine(34) in tRNA + S-adenosyl-L-homocysteine + H(+). Catalyzes carboxymethyl transfer from carboxy-S-adenosyl-L-methionine (Cx-SAM) to 5-hydroxyuridine (ho5U) to form 5-carboxymethoxyuridine (cmo5U) at position 34 in tRNAs. The chain is tRNA U34 carboxymethyltransferase from Vibrio vulnificus (strain CMCP6).